The sequence spans 84 residues: Toluene-4-monooxygenase system, hydroxylase component subunit gamma (84 aa).

This sequence belongs to the TmoB/XamoB family. In terms of assembly, the alkene monooxygenase multicomponent enzyme system is composed of an electron transfer component and a monooxygenase component interacting with the effector protein TmoD. The electron transfer component is composed of a ferredoxin reductase (TmoF) and a ferredoxin (TmoC), and the monooxygenase component is formed by a heterohexamer (dimer of heterotrimers) of two alpha subunits (TmoA), two beta subunits (TmoE) and two gamma subunits (TmoB).

It catalyses the reaction toluene + NADH + O2 + H(+) = 4-methylphenol + NAD(+) + H2O. It functions in the pathway xenobiotic degradation; toluene degradation. Inhibited by Zn(2+) and Cu(2+). Functionally, component of the toluene-4-monooxygenase multicomponent enzyme system which catalyzes the O2- and NADH-dependent hydroxylation of toluene to form p-cresol. Also able to convert benzene to phenol, catechol, and 1,2,3-trihydroxybenzene by successive hydroxylations. The protein is Toluene-4-monooxygenase system, hydroxylase component subunit gamma of Ectopseudomonas mendocina (Pseudomonas mendocina).